Here is a 362-residue protein sequence, read N- to C-terminus: MDRAALLGLSRLCALWAAVLALFPCGAQGNWMWLGIASFGVPEKLGCANLPLNSRQKELCKRKPYLLPSIREGARLGIQECRSQFRHERWNCLVAAASAPGTSPLFGYELSSGTKETAFIYAVMAAGLVHSVTRSCSAGNMTECSCDTTLQNGGSSSEGWHWGGCSDDVQYGMWFSRKFLDFPIKNTTAKESKVLLAMNLHNNEAGRQAVAKLMSLDCRCHGVSGSCAVKTCWKTMSSFEKIGHLLKDKYENSVQISDKIKRKMHRREKDQRKIPIRKDDLLYVNKSPNYCVEDKKLGIPGTQGRECNRTSEGADGCNLLCCGRGYNTHVVRHVERCECKFIWCCYVRCRRCESMTDVHTCK.

The first 29 residues, M1–G29, serve as a signal peptide directing secretion. Disulfide bonds link C81/C92, C136/C144, and C146/C165. A glycan (N-linked (GlcNAc...) asparagine) is linked at N140. Residue N186 is glycosylated (N-linked (GlcNAc...) asparagine). 8 disulfides stabilise this stretch: C218–C232, C220–C227, C291–C322, C307–C317, C321–C361, C337–C352, C339–C349, and C344–C345. S224 carries the O-palmitoleoyl serine; by PORCN lipid modification. N308 carries an N-linked (GlcNAc...) asparagine glycan.

It belongs to the Wnt family. Post-translationally, palmitoleoylation is required for efficient binding to frizzled receptors. Depalmitoleoylation leads to Wnt signaling pathway inhibition.

Its subcellular location is the secreted. It is found in the extracellular space. It localises to the extracellular matrix. Its function is as follows. Ligand for members of the frizzled family of seven transmembrane receptors. Probable developmental protein. May be a signaling molecule which affects the development of discrete regions of tissues. Is likely to signal over only few cell diameters. This is Protein Wnt-16 (WNT16) from Bos taurus (Bovine).